Reading from the N-terminus, the 296-residue chain is MELTVVQREILQELINLYREKNRPIKGTEIALRLNRNPGTIRNQMQALRALDLVDGVPGPKGGYVPTSKAYRALGLEDEGEIIVPIYKDGKKVEGVKVVKIEFDTVSHEKCCSSKIHIEGDTKHFNIGDIIRVGPTYHNKIIINGKIIGRDDIHRILLIDVLGVSSIPNIKVGDVGIKEVWTINPNCTLRETAKLFAEKYISGAPVVDNDKLVGVISLHDIAENIDNIDKKVKEVMRRDVITIHKDEKIYDALKIMNKNNVGRLVIVDDNNKIVGIITRTDILKIISGKFPENFHT.

CBS domains lie at 176 to 232 (GIKE…DKKV) and 236 to 292 (MRRD…KFPE).

This is an uncharacterized protein from Methanocaldococcus jannaschii (strain ATCC 43067 / DSM 2661 / JAL-1 / JCM 10045 / NBRC 100440) (Methanococcus jannaschii).